Here is a 122-residue protein sequence, read N- to C-terminus: Acidic phospholipase A2 1 (122 aa).

Disulfide bonds link cysteine 26-cysteine 115, cysteine 28-cysteine 44, cysteine 43-cysteine 94, cysteine 49-cysteine 122, cysteine 50-cysteine 87, cysteine 57-cysteine 81, and cysteine 75-cysteine 85. The Ca(2+) site is built by tyrosine 27, glycine 29, and glycine 31. Histidine 47 is an active-site residue. Aspartate 48 lines the Ca(2+) pocket. The active site involves aspartate 88.

The protein belongs to the phospholipase A2 family. Group II subfamily. D49 sub-subfamily. Homodimer. It depends on Ca(2+) as a cofactor. Expressed by the venom gland.

It is found in the secreted. The catalysed reaction is a 1,2-diacyl-sn-glycero-3-phosphocholine + H2O = a 1-acyl-sn-glycero-3-phosphocholine + a fatty acid + H(+). PLA2 catalyzes the calcium-dependent hydrolysis of the 2-acyl groups in 3-sn-phosphoglycerides. In Protobothrops mucrosquamatus (Taiwan habu), this protein is Acidic phospholipase A2 1.